The primary structure comprises 161 residues: RuBisCO chaperone RbcX (161 aa).

Disordered regions lie at residues 1–20 (MQFM…KPME) and 130–161 (LGAE…SHAD). Polar residues predominate over residues 147–161 (DSATPDDASNASHAD).

It belongs to the RbcX family. In terms of assembly, homodimer. Interacts with the exposed C-terminal peptide of endogenous RbcL ('Lys-460-Asp-470') via its central cleft, as well as C-terminal peptides from other cyanobacterial RbcL. Contacts a second RbcL monomer via its peripheral polar surface.

It is found in the carboxysome. It localises to the cytoplasm. Its function is as follows. An RbcL-specific chaperone. The central cleft of the RbcX homodimer (RbcX2) binds the C-terminus of an RbcL monomer, stabilizing the C-terminus and probably preventing its reassociation with chaperonin GroEL-ES. At the same time the peripheral region of RbcX2 binds a second RbcL monomer, bridging the RbcL homodimers in the correct orientation. The RbcX2(2)-bound RbcL dimers then assemble into the RbcL8 core (RbcL8-(RbcX2)8). RbcS binding triggers the release of RbcX2. This is RuBisCO chaperone RbcX from Synechococcus sp. (strain ATCC 27144 / PCC 6301 / SAUG 1402/1) (Anacystis nidulans).